The following is a 254-amino-acid chain: Putative epimerase LsrE (254 aa).

A helical transmembrane segment spans residues 14 to 34; that stretch reads VALLASYPLSVGILAGQWIAL. A divalent metal cation contacts are provided by His-50, Asp-52, and His-81. Residue Asp-52 is the Proton acceptor of the active site. Residues His-81, 166 to 169, 199 to 201, and 221 to 222 contribute to the substrate site; these read GYGS, DGS, and GS. Asp-199 is a binding site for a divalent metal cation. The Proton donor role is filled by Asp-199.

Belongs to the ribulose-phosphate 3-epimerase family. It depends on a divalent metal cation as a cofactor.

The protein resides in the cell membrane. The sequence is that of Putative epimerase LsrE (lsrE) from Salmonella typhi.